A 329-amino-acid polypeptide reads, in one-letter code: Src kinase-associated phosphoprotein 2 (329 aa).

Residues 58–95 (YAEDSEEEEDWDSNEGGSLQSERTDKDEEACEGAQQAP) are disordered. The span at 61–70 (DSEEEEDWDS) shows a compositional bias: acidic residues. The PH domain occupies 104 to 207 (SVFKAGYLEK…WVKQIDFVLK (104 aa)). Residues 240 to 263 (EDMPSPPPKVEPVSKHPPPTPAVD) are disordered. A compositionally biased stretch (pro residues) spans 243–260 (PSPPPKVEPVSKHPPPTP). An SH3 domain is found at 267–328 (DYANYYQGLW…PKDYLMELYA (62 aa)).

It belongs to the SKAP family. In terms of processing, phosphorylated on tyrosines.

The protein localises to the cytoplasm. In terms of biological role, may be involved in B-cell and macrophage adhesion processes. May play a role in src signaling pathway. The polypeptide is Src kinase-associated phosphoprotein 2 (skap2) (Takifugu rubripes (Japanese pufferfish)).